Consider the following 826-residue polypeptide: MKEYQPQKIESKWQKRWQDEISYETEVDHNKDKYYVLEMFPYPSGKLHMGHMRVYSIGDVLARFQRMRGYNVLHPMGWDAFGLPAENAAIENQDLPSRWTYANIDNMKDQLQALGTSYDWKREVSTCSPDYYKWTQWMFLQLYKNGLAYKKKAPVNWCPECETVLANEQVENGACWRCDSMVEQKQLSQWFFKITEYADRLDQDLELLEEWPDRVKTMQKNWIGKSQGTEIDFPVKGSREKIRAFTTRPDTIFGATYMVLAPEHPMTEQLVQGTDQEKEVMDFIKGVHEMGKEAREAEDLEKEGVFTGRWAINPLNGEEIPILVGNYVLMEYGTGAIMAVPAHDQRDFQFAHKYNLPIKEVVTPPEGEGKTESETHDELKKAYTDHGILINSPGYNGMTSEQAIEQITRDIENKGIGAGVTTYRLRDWLVSRQRYWGAPIPVLYCDQCGILPVPEDELPVQLPEDVDFSQGSRNVLAARQDFVETSCPQCGGSAQRETDTMDTFVCSSWYFLRYTTPWDNEVPFRQEDVNYWMPVDQYIGGIEHAVLHLLYARFFTKVMYDQGYTNFKEPFSRLLAQGMVNKDGAKMSKSKGNVVSPDEILRTYGADTGRLFILFAAPPEKDLDWNDEGVEGCYRFLQRLYRLVNDNQNLVDLQLDDTKFTKEDKEYHRLIHKTIKKVTDDISERHNFNTAISAIMELTNASSKYKEQKEVNESLLRTGLETIVMLLAPFTPHIAEELWETLGYQDSVHKLNWPSYDEKAMVAEEAEMVVQVNGKVRDHLTVPADSSEETIKEKALEREKVQKYISGAEIKKVIVIPQKLVNIVCK.

Positions 41–51 (PYPSGKLHMGH) match the 'HIGH' region motif. Residues 586–590 (KMSKS) carry the 'KMSKS' region motif. Residue K589 coordinates ATP.

This sequence belongs to the class-I aminoacyl-tRNA synthetase family.

It localises to the cytoplasm. It catalyses the reaction tRNA(Leu) + L-leucine + ATP = L-leucyl-tRNA(Leu) + AMP + diphosphate. The polypeptide is Leucine--tRNA ligase (Natranaerobius thermophilus (strain ATCC BAA-1301 / DSM 18059 / JW/NM-WN-LF)).